We begin with the raw amino-acid sequence, 31 residues long: Photosystem II reaction center protein T (31 aa).

Residues 3–23 (ALVYTFLLIGTLGIIFFAIFF) traverse the membrane as a helical segment.

The protein belongs to the PsbT family. As to quaternary structure, PSII is composed of 1 copy each of membrane proteins PsbA, PsbB, PsbC, PsbD, PsbE, PsbF, PsbH, PsbI, PsbJ, PsbK, PsbL, PsbM, PsbT, PsbY, PsbZ, Psb30/Ycf12, at least 3 peripheral proteins of the oxygen-evolving complex and a large number of cofactors. It forms dimeric complexes.

It localises to the plastid. It is found in the chloroplast thylakoid membrane. Found at the monomer-monomer interface of the photosystem II (PS II) dimer, plays a role in assembly and dimerization of PSII. PSII is a light-driven water plastoquinone oxidoreductase, using light energy to abstract electrons from H(2)O, generating a proton gradient subsequently used for ATP formation. This Tetradesmus obliquus (Green alga) protein is Photosystem II reaction center protein T.